Consider the following 1024-residue polypeptide: Protein sumv-1 (1024 aa).

Disordered regions lie at residues 447-486 (DASQ…KKMP), 501-564 (NFQG…RRGV), 577-617 (PSRH…RSQA), 645-664 (SQMA…GSPQ), 710-739 (VRSG…DTVQ), and 773-1024 (AGNS…EEEL). Polar residues-rich tracts occupy residues 467–486 (SFGT…KKMP), 501–514 (NFQG…SSAT), and 528–542 (RSQQ…QTQD). The segment covering 584 to 600 (SPLTPSTSTSSSQLLAP) has biased composition (low complexity). The segment covering 605-617 (QPGTSSQTFRSQA) has biased composition (polar residues). Composition is skewed to low complexity over residues 710–730 (VRSG…ASGS) and 784–809 (AGAP…ASTS). Over residues 810–832 (VPEPTKSSESSVDPQSDVSFSNP) the composition is skewed to polar residues. Low complexity predominate over residues 859–870 (TLASESTSSEAT). The span at 873–883 (HDTTSSSSAET) shows a compositional bias: polar residues. Residues 903–914 (PEKEKEKIDRPK) show a composition bias toward basic and acidic residues. Low complexity-rich tracts occupy residues 916-943 (PKSS…NQAI), 952-962 (SASTSSSAAST), and 970-986 (LLAE…QQQA). Over residues 987 to 998 (IGSTSKNGGSTK) the composition is skewed to polar residues.

The protein localises to the nucleus. It is found in the cytoplasm. The protein resides in the cell projection. Its subcellular location is the axon. Functionally, nuclear factor that influences the activity of genes involved in vulval development. The protein is Protein sumv-1 of Caenorhabditis elegans.